A 595-amino-acid polypeptide reads, in one-letter code: Ketol-acid reductoisomerase, chloroplastic (595 aa).

Residues 1–72 (MAATAATTFS…GGGSALSAQM (72 aa)) constitute a chloroplast transit peptide. One can recognise a KARI N-terminal Rossmann domain in the interval 108 to 306 (VRGGRNLFPL…ALGSPFTFAT (199 aa)). NADP(+)-binding positions include 129-136 (GVIGWGSQ), 162-167 (RKGSNS), and 201-205 (SDSAQ). H226 is an active-site residue. KARI C-terminal knotted domains are found at residues 307 to 455 (TLEQ…RPAG) and 456 to 592 (DLGP…RPEL). Mg(2+) contacts are provided by D315, E319, E492, and E496. Residue S518 coordinates substrate.

It belongs to the ketol-acid reductoisomerase family. In terms of assembly, homodimer. Mg(2+) serves as cofactor.

It is found in the plastid. The protein localises to the chloroplast. It carries out the reaction (2R)-2,3-dihydroxy-3-methylbutanoate + NADP(+) = (2S)-2-acetolactate + NADPH + H(+). It catalyses the reaction (2R,3R)-2,3-dihydroxy-3-methylpentanoate + NADP(+) = (S)-2-ethyl-2-hydroxy-3-oxobutanoate + NADPH + H(+). It functions in the pathway amino-acid biosynthesis; L-isoleucine biosynthesis; L-isoleucine from 2-oxobutanoate: step 2/4. The protein operates within amino-acid biosynthesis; L-valine biosynthesis; L-valine from pyruvate: step 2/4. The sequence is that of Ketol-acid reductoisomerase, chloroplastic (AHRI) from Spinacia oleracea (Spinach).